The sequence spans 337 residues: Aspartate carbamoyltransferase catalytic subunit (337 aa).

Arg57 and Thr58 together coordinate carbamoyl phosphate. Lys86 contributes to the L-aspartate binding site. 3 residues coordinate carbamoyl phosphate: Arg107, His135, and Gln138. L-aspartate is bound by residues Arg172 and Arg234. Positions 274 and 275 each coordinate carbamoyl phosphate.

This sequence belongs to the aspartate/ornithine carbamoyltransferase superfamily. ATCase family. In terms of assembly, heterododecamer (2C3:3R2) of six catalytic PyrB chains organized as two trimers (C3), and six regulatory PyrI chains organized as three dimers (R2).

The enzyme catalyses carbamoyl phosphate + L-aspartate = N-carbamoyl-L-aspartate + phosphate + H(+). The protein operates within pyrimidine metabolism; UMP biosynthesis via de novo pathway; (S)-dihydroorotate from bicarbonate: step 2/3. Catalyzes the condensation of carbamoyl phosphate and aspartate to form carbamoyl aspartate and inorganic phosphate, the committed step in the de novo pyrimidine nucleotide biosynthesis pathway. The chain is Aspartate carbamoyltransferase catalytic subunit from Saccharophagus degradans (strain 2-40 / ATCC 43961 / DSM 17024).